The chain runs to 359 residues: N-acetyl-gamma-glutamyl-phosphate reductase (359 aa).

The active site involves C162.

It belongs to the NAGSA dehydrogenase family. Type 1 subfamily.

It localises to the cytoplasm. The enzyme catalyses N-acetyl-L-glutamate 5-semialdehyde + phosphate + NADP(+) = N-acetyl-L-glutamyl 5-phosphate + NADPH + H(+). The protein operates within amino-acid biosynthesis; L-arginine biosynthesis; N(2)-acetyl-L-ornithine from L-glutamate: step 3/4. Catalyzes the NADPH-dependent reduction of N-acetyl-5-glutamyl phosphate to yield N-acetyl-L-glutamate 5-semialdehyde. This chain is N-acetyl-gamma-glutamyl-phosphate reductase, found in Prochlorococcus marinus (strain SARG / CCMP1375 / SS120).